We begin with the raw amino-acid sequence, 476 residues long: UDP-N-acetylmuramate--L-alanine ligase (476 aa).

Residue 115–121 (GTHGKTT) coordinates ATP.

Belongs to the MurCDEF family.

The protein localises to the cytoplasm. The enzyme catalyses UDP-N-acetyl-alpha-D-muramate + L-alanine + ATP = UDP-N-acetyl-alpha-D-muramoyl-L-alanine + ADP + phosphate + H(+). It participates in cell wall biogenesis; peptidoglycan biosynthesis. Its function is as follows. Cell wall formation. The polypeptide is UDP-N-acetylmuramate--L-alanine ligase (Paramagnetospirillum magneticum (strain ATCC 700264 / AMB-1) (Magnetospirillum magneticum)).